A 178-amino-acid polypeptide reads, in one-letter code: ATP synthase subunit delta (178 aa).

It belongs to the ATPase delta chain family. In terms of assembly, F-type ATPases have 2 components, F(1) - the catalytic core - and F(0) - the membrane proton channel. F(1) has five subunits: alpha(3), beta(3), gamma(1), delta(1), epsilon(1). F(0) has three main subunits: a(1), b(2) and c(10-14). The alpha and beta chains form an alternating ring which encloses part of the gamma chain. F(1) is attached to F(0) by a central stalk formed by the gamma and epsilon chains, while a peripheral stalk is formed by the delta and b chains.

The protein resides in the cell inner membrane. In terms of biological role, f(1)F(0) ATP synthase produces ATP from ADP in the presence of a proton or sodium gradient. F-type ATPases consist of two structural domains, F(1) containing the extramembraneous catalytic core and F(0) containing the membrane proton channel, linked together by a central stalk and a peripheral stalk. During catalysis, ATP synthesis in the catalytic domain of F(1) is coupled via a rotary mechanism of the central stalk subunits to proton translocation. Its function is as follows. This protein is part of the stalk that links CF(0) to CF(1). It either transmits conformational changes from CF(0) to CF(1) or is implicated in proton conduction. This chain is ATP synthase subunit delta, found in Alcanivorax borkumensis (strain ATCC 700651 / DSM 11573 / NCIMB 13689 / SK2).